The following is a 141-amino-acid chain: Subtilase cytotoxin subunit B (141 aa).

An N-terminal signal peptide occupies residues 1 to 23 (MTIKRFFVCAGIMGCLSLNPAMA). N-glycoloyl-alpha-neuraminate contacts are provided by residues 33–35 (MFS) and Gln59. The interval 89–94 (YFYTTG) is hydrophobic patch important for binding to SubA. Tyr101 provides a ligand contact to N-glycoloyl-alpha-neuraminate.

In terms of assembly, forms a complex with SubA with the stoichiometry SubA1:SubB5 (called SubAB5). Each SubB subunit makes different contacts with the single SubA subunit. This subunit alone forms pentamers.

The protein localises to the secreted. The protein resides in the host cytoplasm. It localises to the host cytosol. Its subcellular location is the host endoplasmic reticulum lumen. In terms of biological role, receptor-binding subunit of subtilase cytotoxin SubAB5. Required for receptor-binding and thus correct trafficking in the host cell. Has specificity for host glycans terminating in the sialic acid N-glycolyl-alpha-neuraminic acid (Neu5Gc); each subunit in the SubB pentamer binds one Neu5Gc. The protease subunit (SubA) cleaves host BiP/HSPA5, inducing the host endoplasmic reticulum stress response and eventual cell death. Culture supernatant of E.coli expressing both subA and subB are toxic for Vero cells (African green monkey kidney cell line), Chinese hamster ovary cells and Hct-8 cells (human colonic epithelial cell line); the subunits are not toxic individually. Purified SubAB5 is highly toxic, &lt;0.1 pg is able to kill at least 50% of 30'000 Vero cells in a microtiter plate assay after 3 days; no cytotoxicity is seen at 24 hours. Preabsorption with cells expressing a ganglioside GM2 mimic reduced cytotoxicity of SubAB5 by 93% in the Vero cytotoxicity assay. Intraperitoneal injection of 200 ng of purified SubAB5 kills mice; the higher the dose the faster the mice die. Animals injected with purified SubAB5 have microvascular thrombi in the brain and other organs, including the renal tubules and glomeruli. Mice fed E.coli cells expressing cloned SubAB5 experience drastic weight loss and appear ill and lethargic. SubB alone at 2.5 ug/ml causes vacuolation of Vero cells, which requires the V-type ATPase proton pump; treated cells die. Protein synthesis in Vero cells is transiently inhibited by SubAB5; both subunits are required for this effect. Inhibition of protein synthesis is prevented by brefeldin A; cells are arrested in the G1 phase. SubAB5 at 100 ng/ml induced caspase-dependent apoptosis in Vero cells through mitochondrial membrane damage. In Escherichia coli, this protein is Subtilase cytotoxin subunit B.